We begin with the raw amino-acid sequence, 117 residues long: G antigen 4 (117 aa).

Residues 1 to 117 (MSWRGRSTYY…PEEGEKQSQC (117 aa)) are disordered. Acidic residues-rich tracts occupy residues 32-45 (FSDE…EEGE) and 87-96 (ECEDGPDGQE). Residues 103–117 (EEVKTPEEGEKQSQC) are compositionally biased toward basic and acidic residues.

Belongs to the GAGE family. As to expression, expressed in a variety of tumor tissues but not in normal tissues, except testis.

Its function is as follows. Antigen, recognized on melanoma by autologous cytolytic T-lymphocytes. The polypeptide is G antigen 4 (Homo sapiens (Human)).